We begin with the raw amino-acid sequence, 638 residues long: Probable potassium transport system protein Kup (638 aa).

12 helical membrane passes run 25–45 (LAIA…LYSL), 65–85 (VISL…LLFV), 114–134 (AGAL…DAVI), 152–172 (PHLS…LFWI), 184–204 (FGPI…YHIV), 226–246 (LLQA…AEAL), 262–282 (AYGL…ALLI), 291–311 (PFFL…STVA), 352–372 (IYVP…VIGF), 382–402 (YGIA…VVMV), 410–430 (LLVG…FGAN), and 434–454 (VAQG…LLMT).

Belongs to the HAK/KUP transporter (TC 2.A.72) family.

It localises to the cell inner membrane. It catalyses the reaction K(+)(in) + H(+)(in) = K(+)(out) + H(+)(out). Transport of potassium into the cell. Likely operates as a K(+):H(+) symporter. The chain is Probable potassium transport system protein Kup from Burkholderia lata (strain ATCC 17760 / DSM 23089 / LMG 22485 / NCIMB 9086 / R18194 / 383).